A 159-amino-acid chain; its full sequence is Succinate dehydrogenase [ubiquinone] cytochrome b small subunit, mitochondrial (159 aa).

The transit peptide at M1–Q36 directs the protein to the mitochondrion. Residues D37 to S63 are Mitochondrial matrix-facing. Residues L64 to L85 form a helical membrane-spanning segment. Residues N86–A90 lie on the Mitochondrial intermembrane side of the membrane. A helical transmembrane segment spans residues M91–V111. H102 is a heme b binding site. The Mitochondrial matrix segment spans residues T112–L120. Y114 contributes to the a ubiquinone binding site. A helical membrane pass occupies residues Q121–F142. The Mitochondrial intermembrane segment spans residues N143–L159.

It belongs to the CybS family. Component of complex II composed of four subunits: the flavoprotein (FP) SDHA, iron-sulfur protein (IP) SDHB, and a cytochrome b560 composed of SDHC and SDHD.

It is found in the mitochondrion inner membrane. The protein operates within carbohydrate metabolism; tricarboxylic acid cycle. Its function is as follows. Membrane-anchoring subunit of succinate dehydrogenase (SDH) that is involved in complex II of the mitochondrial electron transport chain and is responsible for transferring electrons from succinate to ubiquinone (coenzyme Q). SDH also oxidizes malate to the non-canonical enol form of oxaloacetate, enol-oxaloacetate. Enol-oxaloacetate, which is a potent inhibitor of the succinate dehydrogenase activity, is further isomerized into keto-oxaloacetate. The protein is Succinate dehydrogenase [ubiquinone] cytochrome b small subunit, mitochondrial (SDHD) of Sus scrofa (Pig).